The chain runs to 609 residues: METELHLAAGYCAATGVYRSGHPPQFAAAAALSFPEYILPHMLLPGRRARPAFVDASTGAALSFAGLRALSLRVARALAAAGLRRGRVALLLSPNSLHFPALSLAVLSLGAVLSAANPLLTPDELARQADDAKPFLALVTGELAPKLRSIAPDVKLVLVEQLLADVAAEVDDDETLDLPAANIGRDDAALLFYSSGTTGRSKGVVSTHGNAIAMAASLERAWGGGGGGGEKPQQYDDHDEAYGCVLPMFHMFGFSSFVMGTAALGATAVVVPGRFSVEKTMAAVEEYGVTRLLVVPPMVVKMVAAAAGDGEPSRRRLRLRQVVSSGAPLQREHMARFRSCFPAVNLGQCYGLTETTGIVTMCDLQHNDNGIDKVEMPPSSTDMTFVAVAATTTEVKERSTGGGGGGGGVSIGRLMPDVEAKIVDPDSGELLPPRRTGELWVRGPSTMRGYLNNEEATALALVAAAGSVSVSGGGERWLRTGDLCYVDSRGLVYVVDRVKELIKCNAYQVAPAELEDVLATHPDIHDAAVAPYPDKEAGEIPMAYVVKKQGSGHLQEDEVISFVQNKVAPYKKIRKVVFVDSIPRSPSGKILRRQLKNLLQGSILHRSRM.

Residues S194, S195, G196, T197, T198, and K202 each contribute to the ATP site. Residues F252 and S256 each coordinate (E)-4-coumaroyl-AMP. R274 lines the CoA pocket. Residues 276–348 (SVEKTMAAVE…SCFPAVNLGQ (73 aa)) are SBD1. Positions 326, 348, 353, and 361 each coordinate (E)-4-coumaroyl-AMP. The ATP site is built by Q348 and T353. Residues 349-450 (CYGLTETTGI…VRGPSTMRGY (102 aa)) are SBD2. Residues D482 and R497 each coordinate ATP. Positions 499 and 503 each coordinate (E)-4-coumaroyl-AMP. Residue A506 coordinates CoA. K589 lines the ATP pocket.

It belongs to the ATP-dependent AMP-binding enzyme family. Mg(2+) is required as a cofactor.

The catalysed reaction is (E)-4-coumarate + ATP + CoA = (E)-4-coumaroyl-CoA + AMP + diphosphate. The enzyme catalyses (E)-4-coumarate + ATP + H(+) = (E)-4-coumaroyl-AMP + diphosphate. It carries out the reaction (E)-4-coumaroyl-AMP + CoA = (E)-4-coumaroyl-CoA + AMP + H(+). Its function is as follows. Carboxylate--CoA ligase that may use 4-coumarate as substrate. Follows a two-step reaction mechanism, wherein the carboxylate substrate first undergoes adenylation by ATP, followed by a thioesterification in the presence of CoA to yield the final CoA thioester. In Oryza sativa subsp. japonica (Rice), this protein is Putative 4-coumarate--CoA ligase-like 8 (4CLL8).